A 237-amino-acid polypeptide reads, in one-letter code: LexA repressor (237 aa).

Residues 26–46 (FDEMKEALDLRSKSGIHRLIT) constitute a DNA-binding region (H-T-H motif). Active-site for autocatalytic cleavage activity residues include Ser158 and Lys196.

It belongs to the peptidase S24 family. In terms of assembly, homodimer.

It carries out the reaction Hydrolysis of Ala-|-Gly bond in repressor LexA.. In terms of biological role, represses a number of genes involved in the response to DNA damage (SOS response), including recA and lexA. In the presence of single-stranded DNA, RecA interacts with LexA causing an autocatalytic cleavage which disrupts the DNA-binding part of LexA, leading to derepression of the SOS regulon and eventually DNA repair. This Xanthobacter autotrophicus (strain ATCC BAA-1158 / Py2) protein is LexA repressor.